The primary structure comprises 496 residues: Ribose import ATP-binding protein RbsA (496 aa).

ABC transporter domains lie at 3-239 (IVME…VGRE) and 246-493 (ERTP…TGGN). 35–42 (GENGAGKS) contributes to the ATP binding site.

Belongs to the ABC transporter superfamily. Ribose importer (TC 3.A.1.2.1) family. The complex is composed of an ATP-binding protein (RbsA), two transmembrane proteins (RbsC) and a solute-binding protein (RbsB).

It localises to the cell membrane. The catalysed reaction is D-ribose(out) + ATP + H2O = D-ribose(in) + ADP + phosphate + H(+). Part of the ABC transporter complex RbsABC involved in ribose import. Responsible for energy coupling to the transport system. The protein is Ribose import ATP-binding protein RbsA of Oceanobacillus iheyensis (strain DSM 14371 / CIP 107618 / JCM 11309 / KCTC 3954 / HTE831).